Here is a 75-residue protein sequence, read N- to C-terminus: uncharacterized protein (75 aa).

This is an uncharacterized protein from Vaccinia virus (strain Copenhagen) (VACV).